Consider the following 367-residue polypeptide: Carbamoyl phosphate synthase small chain (367 aa).

Residues 1–182 (MKLENKKGYL…PIFHPNTGDM (182 aa)) form a CPSase region. Ser50, Gly230, and Gly232 together coordinate L-glutamine. A Glutamine amidotransferase type-1 domain is found at 182-367 (MIVVVDCGIK…DKFRTMVTGK (186 aa)). Catalysis depends on Cys258, which acts as the Nucleophile. Residues Leu259, Gln262, Asn300, Gly302, and Tyr303 each coordinate L-glutamine. Active-site residues include His343 and Glu345.

Belongs to the CarA family. In terms of assembly, composed of two chains; the small (or glutamine) chain promotes the hydrolysis of glutamine to ammonia, which is used by the large (or ammonia) chain to synthesize carbamoyl phosphate. Tetramer of heterodimers (alpha,beta)4.

The catalysed reaction is hydrogencarbonate + L-glutamine + 2 ATP + H2O = carbamoyl phosphate + L-glutamate + 2 ADP + phosphate + 2 H(+). It carries out the reaction L-glutamine + H2O = L-glutamate + NH4(+). It participates in amino-acid biosynthesis; L-arginine biosynthesis; carbamoyl phosphate from bicarbonate: step 1/1. Its pathway is pyrimidine metabolism; UMP biosynthesis via de novo pathway; (S)-dihydroorotate from bicarbonate: step 1/3. In terms of biological role, small subunit of the glutamine-dependent carbamoyl phosphate synthetase (CPSase). CPSase catalyzes the formation of carbamoyl phosphate from the ammonia moiety of glutamine, carbonate, and phosphate donated by ATP, constituting the first step of 2 biosynthetic pathways, one leading to arginine and/or urea and the other to pyrimidine nucleotides. The small subunit (glutamine amidotransferase) binds and cleaves glutamine to supply the large subunit with the substrate ammonia. In Saccharolobus solfataricus (strain ATCC 35092 / DSM 1617 / JCM 11322 / P2) (Sulfolobus solfataricus), this protein is Carbamoyl phosphate synthase small chain.